We begin with the raw amino-acid sequence, 149 residues long: Large ribosomal subunit protein uL15A (149 aa).

The interval Arg21 to His40 is disordered.

Belongs to the universal ribosomal protein uL15 family. As to quaternary structure, component of the large ribosomal subunit.

Its subcellular location is the cytoplasm. It is found in the cytosol. The protein resides in the endoplasmic reticulum. Component of the large ribosomal subunit. The ribosome is a large ribonucleoprotein complex responsible for the synthesis of proteins in the cell. This chain is Large ribosomal subunit protein uL15A (rpl27a-1), found in Entamoeba histolytica (strain ATCC 30459 / HM-1:IMSS / ABRM).